We begin with the raw amino-acid sequence, 388 residues long: Chorismate synthase (388 aa).

The NADP(+) site is built by Arg-40 and Arg-46. FMN contacts are provided by residues 131–133, 252–253, Gly-296, 311–315, and Arg-337; these read RSS, NA, and KPIPT.

This sequence belongs to the chorismate synthase family. In terms of assembly, homotetramer. FMNH2 is required as a cofactor.

It catalyses the reaction 5-O-(1-carboxyvinyl)-3-phosphoshikimate = chorismate + phosphate. Its pathway is metabolic intermediate biosynthesis; chorismate biosynthesis; chorismate from D-erythrose 4-phosphate and phosphoenolpyruvate: step 7/7. In terms of biological role, catalyzes the anti-1,4-elimination of the C-3 phosphate and the C-6 proR hydrogen from 5-enolpyruvylshikimate-3-phosphate (EPSP) to yield chorismate, which is the branch point compound that serves as the starting substrate for the three terminal pathways of aromatic amino acid biosynthesis. This reaction introduces a second double bond into the aromatic ring system. The protein is Chorismate synthase of Limosilactobacillus fermentum (strain NBRC 3956 / LMG 18251) (Lactobacillus fermentum).